The primary structure comprises 311 residues: Glutaminase (311 aa).

Residues Ser-66, Asn-116, Glu-162, Asn-169, Tyr-193, Tyr-245, and Val-263 each contribute to the substrate site.

It belongs to the glutaminase family. In terms of assembly, homotetramer.

It catalyses the reaction L-glutamine + H2O = L-glutamate + NH4(+). This Rhodopseudomonas palustris (strain HaA2) protein is Glutaminase.